The sequence spans 293 residues: Aspartate carbamoyltransferase catalytic subunit (293 aa).

The carbamoyl phosphate site is built by Arg-50 and Thr-51. L-aspartate is bound at residue Lys-78. Carbamoyl phosphate contacts are provided by Arg-100, His-127, and Gln-130. L-aspartate is bound by residues Arg-160 and Arg-210. Carbamoyl phosphate contacts are provided by Ala-253 and Pro-254.

Belongs to the aspartate/ornithine carbamoyltransferase superfamily. ATCase family. In terms of assembly, heterododecamer (2C3:3R2) of six catalytic PyrB chains organized as two trimers (C3), and six regulatory PyrI chains organized as three dimers (R2).

It catalyses the reaction carbamoyl phosphate + L-aspartate = N-carbamoyl-L-aspartate + phosphate + H(+). It functions in the pathway pyrimidine metabolism; UMP biosynthesis via de novo pathway; (S)-dihydroorotate from bicarbonate: step 2/3. Its function is as follows. Catalyzes the condensation of carbamoyl phosphate and aspartate to form carbamoyl aspartate and inorganic phosphate, the committed step in the de novo pyrimidine nucleotide biosynthesis pathway. The chain is Aspartate carbamoyltransferase catalytic subunit from Staphylococcus epidermidis (strain ATCC 35984 / DSM 28319 / BCRC 17069 / CCUG 31568 / BM 3577 / RP62A).